We begin with the raw amino-acid sequence, 290 residues long: ATP synthase gamma chain (290 aa).

Belongs to the ATPase gamma chain family. In terms of assembly, F-type ATPases have 2 components, CF(1) - the catalytic core - and CF(0) - the membrane proton channel. CF(1) has five subunits: alpha(3), beta(3), gamma(1), delta(1), epsilon(1). CF(0) has three main subunits: a, b and c.

The protein resides in the cell membrane. Functionally, produces ATP from ADP in the presence of a proton gradient across the membrane. The gamma chain is believed to be important in regulating ATPase activity and the flow of protons through the CF(0) complex. This is ATP synthase gamma chain from Rubrobacter xylanophilus (strain DSM 9941 / JCM 11954 / NBRC 16129 / PRD-1).